Consider the following 1439-residue polypeptide: Fanconi anemia group D2 protein (1439 aa).

Lys-563 participates in a covalent cross-link: Glycyl lysine isopeptide (Lys-Gly) (interchain with G-Cter in ubiquitin).

This sequence belongs to the Fanconi anemia protein FANCD2 family. In terms of assembly, homodimer; cannot be ubiquitinated and does not bind DNA. Part of a FANCI-FANCD2 heterodimeric complex that binds and scans dsDNA for DNA damage. Interacts directly with FANCE and FANCI. Interacts with USP1 and MEN1. The ubiquitinated form specifically interacts with BRCA1 and BLM. Both the nonubiquitinated and the monoubiquitinated forms interact with BRCA2; this interaction is mediated by phosphorylated FANCG and the complex also includes XCCR3. The ubiquitinated form specifically interacts with MTMR15/FAN1 (via UBZ-type zinc finger), leading to recruit MTMR15/FAN1 to sites of DNA damage. Interacts with DCLRE1B/Apollo. Interacts with POLN. Interacts with UHRF1 and UHRF2; these interactions promote FANCD2 activation. Post-translationally, monoubiquitinated on Lys-563 during S phase and upon genotoxic stress. Deubiquitinated by USP1 as cells enter G2/M, or once DNA repair is completed. Monoubiquitination prevents DNA release from the FANCI-FANCD2 complex. FANCD2 is only ubiquitinated in the FANCI-FANCD2 complex and the monoubiquitination of FANCD2 is promoted by phosphorylation of FANCI. Phosphorylated in response to various genotoxic stresses by ATM and/or ATR.

Its subcellular location is the nucleus. Required for maintenance of chromosomal stability. Promotes accurate and efficient pairing of homologs during meiosis. Involved in the repair of DNA double-strand breaks, both by homologous recombination and single-strand annealing. The FANCI-FANCD2 complex binds and scans double-stranded DNA (dsDNA) for DNA damage; this complex stalls at DNA junctions between double-stranded DNA and single-stranded DNA. May participate in S phase and G2 phase checkpoint activation upon DNA damage. Plays a role in preventing breakage and loss of missegregating chromatin at the end of cell division, particularly after replication stress. Required for the targeting, or stabilization, of BLM to non-centromeric abnormal structures induced by replicative stress. Promotes BRCA2/FANCD1 loading onto damaged chromatin. May also be involved in B-cell immunoglobulin isotype switching. The chain is Fanconi anemia group D2 protein from Gallus gallus (Chicken).